We begin with the raw amino-acid sequence, 359 residues long: Probably inactive receptor-like protein kinase At5g41680 (359 aa).

Residues Ala-59 to Phe-357 enclose the Protein kinase domain. ATP is bound by residues Leu-65–Thr-73 and Lys-87.

Belongs to the protein kinase superfamily. Ser/Thr protein kinase family.

The protein is Probably inactive receptor-like protein kinase At5g41680 of Arabidopsis thaliana (Mouse-ear cress).